A 182-amino-acid polypeptide reads, in one-letter code: Kappa-casein (182 aa).

The first 20 residues, 1–20, serve as a signal peptide directing secretion; that stretch reads MKSFLLVVNALALTLPFLAV. O-linked (GalNAc...) threonine glycans are attached at residues Thr133, Thr143, Thr148, and Thr151. Thr157 carries the phosphothreonine; alternate modification. The O-linked (GalNAc...) threonine; alternate glycan is linked to Thr157. 3 O-linked (GalNAc...) threonine glycosylation sites follow: Thr167, Thr169, and Thr178.

Belongs to the kappa-casein family. In terms of assembly, heteromultimers composed of alpha-s1 casein and kappa casein linked by disulfide bonds. Post-translationally, the N-terminus is blocked. As to expression, mammary gland specific. Secreted in milk.

Its subcellular location is the secreted. Kappa-casein stabilizes micelle formation, preventing casein precipitation in milk. In Homo sapiens (Human), this protein is Kappa-casein (CSN3).